The chain runs to 177 residues: Large ribosomal subunit protein uL6 (177 aa).

It belongs to the universal ribosomal protein uL6 family. In terms of assembly, part of the 50S ribosomal subunit.

Its function is as follows. This protein binds to the 23S rRNA, and is important in its secondary structure. It is located near the subunit interface in the base of the L7/L12 stalk, and near the tRNA binding site of the peptidyltransferase center. This chain is Large ribosomal subunit protein uL6, found in Pseudomonas fluorescens (strain SBW25).